The primary structure comprises 97 residues: MARSLFKAKLLLAPVADGISLSISRRGYAAAAPLGTISRTGIMEKNDLRPAVREDSGASSAWAPDPITGYYRPENRAVEIDPAELREMLLNHKVRAH.

The protein belongs to the LEA type 3 family.

This is Late embryogenesis abundant protein Lea5 (LEA5) from Citrus sinensis (Sweet orange).